Here is a 1399-residue protein sequence, read N- to C-terminus: DNA-directed RNA polymerase subunit beta' (1399 aa).

Zn(2+)-binding residues include C71, C73, C86, and C89. The Mg(2+) site is built by D462, D464, and D466. Zn(2+) contacts are provided by C810, C884, C891, and C894.

The protein belongs to the RNA polymerase beta' chain family. In terms of assembly, the RNAP catalytic core consists of 2 alpha, 1 beta, 1 beta' and 1 omega subunit. When a sigma factor is associated with the core the holoenzyme is formed, which can initiate transcription. Mg(2+) serves as cofactor. It depends on Zn(2+) as a cofactor.

It carries out the reaction RNA(n) + a ribonucleoside 5'-triphosphate = RNA(n+1) + diphosphate. Functionally, DNA-dependent RNA polymerase catalyzes the transcription of DNA into RNA using the four ribonucleoside triphosphates as substrates. This Chelativorans sp. (strain BNC1) protein is DNA-directed RNA polymerase subunit beta'.